Consider the following 598-residue polypeptide: Protein VASCULAR ASSOCIATED DEATH 1, chloroplastic (598 aa).

The span at 1–11 (MAMLSTASVSG) shows a compositional bias: polar residues. The interval 1-64 (MAMLSTASVS…PSRGGDNQSE (64 aa)) is disordered. The transit peptide at 1-68 (MAMLSTASVS…GDNQSEVISK (68 aa)) directs the protein to the chloroplast. Asn-61 carries an N-linked (GlcNAc...) asparagine glycan. Residues 70–134 (EEYRQLFRLP…PFAEISCVKR (65 aa)) form the GRAM domain. The VASt domain maps to 272–444 (DFTKVAEAKF…MAHELLKQKK (173 aa)). N-linked (GlcNAc...) asparagine glycosylation is found at Asn-329 and Asn-494. Residues 507–527 (QVIVLAFAVILLMQVTIVVLL) form a helical membrane-spanning segment. Positions 553 to 595 (WLEKRMHFLREEMMMVEDRLQRMRQDHAALKAQFHHLERLLRR) form a coiled coil.

The protein resides in the membrane. Its subcellular location is the plastid. It is found in the chloroplast. In terms of biological role, involved in ethylene- and salicylic acid-dependent cell death control associated with cells in the vicinity of vascular bundles. This is Protein VASCULAR ASSOCIATED DEATH 1, chloroplastic from Arabidopsis thaliana (Mouse-ear cress).